The sequence spans 1023 residues: Exportin-T (1023 aa).

It belongs to the exportin family.

The protein localises to the nucleus. Its subcellular location is the cytoplasm. Its function is as follows. tRNA nucleus export receptor which facilitates tRNA translocation across the nuclear pore complex. Involved in pre-tRNA splicing, probably by affecting the interaction of pre-tRNA with splicing endonuclease. This is Exportin-T (los1) from Botryotinia fuckeliana (strain B05.10) (Noble rot fungus).